A 128-amino-acid chain; its full sequence is Aspartate 1-decarboxylase (128 aa).

Residue serine 25 is the Schiff-base intermediate with substrate; via pyruvic acid of the active site. The residue at position 25 (serine 25) is a Pyruvic acid (Ser). Threonine 57 is a binding site for substrate. The active-site Proton donor is tyrosine 58. 73 to 75 (GSA) serves as a coordination point for substrate.

The protein belongs to the PanD family. As to quaternary structure, heterooctamer of four alpha and four beta subunits. It depends on pyruvate as a cofactor. In terms of processing, is synthesized initially as an inactive proenzyme, which is activated by self-cleavage at a specific serine bond to produce a beta-subunit with a hydroxyl group at its C-terminus and an alpha-subunit with a pyruvoyl group at its N-terminus.

Its subcellular location is the cytoplasm. It carries out the reaction L-aspartate + H(+) = beta-alanine + CO2. The protein operates within cofactor biosynthesis; (R)-pantothenate biosynthesis; beta-alanine from L-aspartate: step 1/1. Functionally, catalyzes the pyruvoyl-dependent decarboxylation of aspartate to produce beta-alanine. The sequence is that of Aspartate 1-decarboxylase from Paraburkholderia phymatum (strain DSM 17167 / CIP 108236 / LMG 21445 / STM815) (Burkholderia phymatum).